Consider the following 62-residue polypeptide: Potassium channel toxin kappa-KTx 3.2 (62 aa).

An N-terminal signal peptide occupies residues 1-26; sequence MKSTLMTASLLILVLLSIVDYASVYA. Positions 27–36 are excised as a propeptide; that stretch reads ELIDSEISME. 2 disulfide bridges follow: Cys43-Cys61 and Cys47-Cys57.

Belongs to the short scorpion toxin superfamily. Potassium channel inhibitor kappa-KTx family. Kappa-KTx 3 subfamily. Expressed by the venom gland.

Its subcellular location is the secreted. Its function is as follows. Potassium channel inhibitor (Kv). The chain is Potassium channel toxin kappa-KTx 3.2 from Heterometrus petersii (Asian forest scorpion).